Reading from the N-terminus, the 579-residue chain is Adenine deaminase (579 aa).

It belongs to the metallo-dependent hydrolases superfamily. Adenine deaminase family. Mn(2+) is required as a cofactor.

The catalysed reaction is adenine + H2O + H(+) = hypoxanthine + NH4(+). The protein is Adenine deaminase of Listeria monocytogenes serotype 4b (strain F2365).